A 571-amino-acid polypeptide reads, in one-letter code: MRTSKYLLSTLKETPNDAEVVSHQLMLRAGMIRKLASGLYTWLPTGLRVLRKVENIVRQEIDNAGAIETLMPVVQPFELWEETGRSEKMGPELLRFTDRHVRPFVLSPTAEEVITALVRNEVSSYKQLPINLYQIQTKFRDERRPRFGVMRAREFCMMDAYSFDIDKAGLEKSYQAMHDAYCKAFDRMGLEYRPVLADSGAIGGNGSQEFHVLAESGEDLIAFSTESDYAANIEKAEAVAPAVERAAPTQEMTLVDTPNAKTIAELVEQHGIAIEKTVKTLFVKASDAIEAPIVALIIRGDHELNEIKAENLAEVATPLEMATEEEMRELIGAGAGSLGPVGLKLPFIVDRSVAVMSDFGAGANIDGKHYFGINWGRDVELGQVADLRNVVEGDPSPCGKGTLMLKRGIEVGHIFQLGNVYSEAMNCGVLDSNGKNVILEMGCYGIGVSRVVAAAIEQNNDKYGIIWPDALAPFQVAIVPMNMHKSERVQEAAEKLYAELTAMGIEVLFDDRKERPGVMFSDMELIGIPHTIVIGDRSMDEGHFEYKNRRSGEKTPVAMADIVEHIKAQLK.

Belongs to the class-II aminoacyl-tRNA synthetase family. ProS type 1 subfamily. As to quaternary structure, homodimer.

Its subcellular location is the cytoplasm. The catalysed reaction is tRNA(Pro) + L-proline + ATP = L-prolyl-tRNA(Pro) + AMP + diphosphate. Catalyzes the attachment of proline to tRNA(Pro) in a two-step reaction: proline is first activated by ATP to form Pro-AMP and then transferred to the acceptor end of tRNA(Pro). As ProRS can inadvertently accommodate and process non-cognate amino acids such as alanine and cysteine, to avoid such errors it has two additional distinct editing activities against alanine. One activity is designated as 'pretransfer' editing and involves the tRNA(Pro)-independent hydrolysis of activated Ala-AMP. The other activity is designated 'posttransfer' editing and involves deacylation of mischarged Ala-tRNA(Pro). The misacylated Cys-tRNA(Pro) is not edited by ProRS. The polypeptide is Proline--tRNA ligase (Vibrio vulnificus (strain CMCP6)).